The primary structure comprises 161 residues: Protein-export protein SecB (161 aa).

It belongs to the SecB family. In terms of assembly, homotetramer, a dimer of dimers. One homotetramer interacts with 1 SecA dimer.

The protein localises to the cytoplasm. In terms of biological role, one of the proteins required for the normal export of preproteins out of the cell cytoplasm. It is a molecular chaperone that binds to a subset of precursor proteins, maintaining them in a translocation-competent state. It also specifically binds to its receptor SecA. The polypeptide is Protein-export protein SecB (Coxiella burnetii (strain Dugway 5J108-111)).